Here is a 1349-residue protein sequence, read N- to C-terminus: DNA-directed RNA polymerase subunit beta' (1349 aa).

Zn(2+) is bound by residues cysteine 70, cysteine 72, cysteine 85, and cysteine 88. Mg(2+) is bound by residues aspartate 460, aspartate 462, and aspartate 464. Residues cysteine 801, cysteine 875, cysteine 882, and cysteine 885 each coordinate Zn(2+).

It belongs to the RNA polymerase beta' chain family. The RNAP catalytic core consists of 2 alpha, 1 beta, 1 beta' and 1 omega subunit. When a sigma factor is associated with the core the holoenzyme is formed, which can initiate transcription. It depends on Mg(2+) as a cofactor. Zn(2+) serves as cofactor.

It catalyses the reaction RNA(n) + a ribonucleoside 5'-triphosphate = RNA(n+1) + diphosphate. Its function is as follows. DNA-dependent RNA polymerase catalyzes the transcription of DNA into RNA using the four ribonucleoside triphosphates as substrates. This Desulfotalea psychrophila (strain LSv54 / DSM 12343) protein is DNA-directed RNA polymerase subunit beta'.